A 432-amino-acid polypeptide reads, in one-letter code: Enolase (432 aa).

(2R)-2-phosphoglycerate is bound at residue Q164. The active-site Proton donor is E206. Mg(2+) is bound by residues D243, E284, and D311. Residues K336, R365, S366, and K387 each coordinate (2R)-2-phosphoglycerate. Catalysis depends on K336, which acts as the Proton acceptor.

The protein belongs to the enolase family. It depends on Mg(2+) as a cofactor.

The protein localises to the cytoplasm. It is found in the secreted. It localises to the cell surface. The enzyme catalyses (2R)-2-phosphoglycerate = phosphoenolpyruvate + H2O. It participates in carbohydrate degradation; glycolysis; pyruvate from D-glyceraldehyde 3-phosphate: step 4/5. In terms of biological role, catalyzes the reversible conversion of 2-phosphoglycerate (2-PG) into phosphoenolpyruvate (PEP). It is essential for the degradation of carbohydrates via glycolysis. This Synechococcus sp. (strain JA-3-3Ab) (Cyanobacteria bacterium Yellowstone A-Prime) protein is Enolase.